A 109-amino-acid chain; its full sequence is Flagellar hook-basal body complex protein FliE (109 aa).

The protein belongs to the FliE family.

It is found in the bacterial flagellum basal body. The chain is Flagellar hook-basal body complex protein FliE from Stutzerimonas stutzeri (strain A1501) (Pseudomonas stutzeri).